The sequence spans 544 residues: Lipid II flippase MurJ (544 aa).

The next 14 helical transmembrane spans lie at 21–41 (ILGMVYLIPFSIMVGATGGAL), 49–69 (YTLFLNIATMGFPAAVSKFVS), 90–110 (VMLVTGMIAFFILYLSAPMFA), 127–147 (VVYVIRMVSLALLVVPIMSLV), 169–189 (IVRIIFLLSATFLILKVFNGG), 191–211 (VIAVGYATFAALIGAFGGLVV), 241–261 (MFFELFSYAAPYVFVGLAIPL), 297–317 (LVMIPVSLATAFGLTLIPTIT), 338–358 (TILFLIIPAVVGISLLSGPTY), 375–395 (ILLWYSPVAILFSLFTVNAAI), 404–424 (FAVVSLVIGVVIKLVLNVPLI), 431–451 (GAILATALGYIASLLYGFIMI), 471–491 (VLSAIMGIAVKIVQWVLGFFI), and 500–520 (AAIVVVIAAAVGGAVYLYCGY).

It belongs to the polysaccharide synthase family.

It is found in the cell membrane. The protein operates within cell wall biogenesis; peptidoglycan biosynthesis. Functionally, involved in peptidoglycan biosynthesis. Transports lipid-linked peptidoglycan precursors from the inner to the outer leaflet of the cytoplasmic membrane. Not essential for growth. This chain is Lipid II flippase MurJ, found in Bacillus subtilis (strain 168).